Reading from the N-terminus, the 185-residue chain is Putative manganese efflux pump MntP (185 aa).

A run of 6 helical transmembrane segments spans residues 3-23, 41-61, 70-90, 101-121, 123-143, and 165-185; these read PFAVVLLAFSMSVDAFAVSVG, AVFGVVEAITPVIGWVAGVAA, HWLAFGLLAAVGLHMLYAAVW, SFTVLMATAIGTSLDAMAVGV, LAFLNVNIVVVATAIGLATFL, and AVAGIALFGLGLSILIEHLTA.

Belongs to the MntP (TC 9.B.29) family.

The protein localises to the cell inner membrane. Its function is as follows. Probably functions as a manganese efflux pump. This Bradyrhizobium sp. (strain BTAi1 / ATCC BAA-1182) protein is Putative manganese efflux pump MntP.